A 114-amino-acid polypeptide reads, in one-letter code: Histone H2A.Z-specific chaperone chz-1 (114 aa).

Over residues Met-1 to Phe-22 the composition is skewed to polar residues. Residues Met-1–Glu-114 form a disordered region. Basic and acidic residues predominate over residues Ser-24–Gly-40. Composition is skewed to acidic residues over residues Glu-41 to Asp-68 and Pro-93 to Glu-114.

It belongs to the CHZ1 family. In terms of assembly, forms a heterotrimer with H2A.Z-H2B, stabilizing the association of the histone dimer. Also, with a lower affinity, forms a heterotrimer with H2A-H2B.

The protein localises to the nucleus. Functionally, forms a chaperone-bound H2A.Z-H2B complex that acts as a source for SWR1 complex-dependent H2A to H2A.Z histone replacement in chromatin. This Neurospora crassa (strain ATCC 24698 / 74-OR23-1A / CBS 708.71 / DSM 1257 / FGSC 987) protein is Histone H2A.Z-specific chaperone chz-1 (chz-1).